A 258-amino-acid polypeptide reads, in one-letter code: Imidazole glycerol phosphate synthase subunit HisF (258 aa).

Residues aspartate 11 and aspartate 130 contribute to the active site.

The protein belongs to the HisA/HisF family. As to quaternary structure, heterodimer of HisH and HisF.

The protein localises to the cytoplasm. It catalyses the reaction 5-[(5-phospho-1-deoxy-D-ribulos-1-ylimino)methylamino]-1-(5-phospho-beta-D-ribosyl)imidazole-4-carboxamide + L-glutamine = D-erythro-1-(imidazol-4-yl)glycerol 3-phosphate + 5-amino-1-(5-phospho-beta-D-ribosyl)imidazole-4-carboxamide + L-glutamate + H(+). It participates in amino-acid biosynthesis; L-histidine biosynthesis; L-histidine from 5-phospho-alpha-D-ribose 1-diphosphate: step 5/9. Functionally, IGPS catalyzes the conversion of PRFAR and glutamine to IGP, AICAR and glutamate. The HisF subunit catalyzes the cyclization activity that produces IGP and AICAR from PRFAR using the ammonia provided by the HisH subunit. The chain is Imidazole glycerol phosphate synthase subunit HisF from Enterobacter sp. (strain 638).